Here is a 375-residue protein sequence, read N- to C-terminus: 5-amino-6-(D-ribitylamino)uracil--L-tyrosine 4-hydroxyphenyl transferase 1 (375 aa).

In terms of domain architecture, Radical SAM core spans 50 to 284 (VTYVVNRNIN…AVSRILFHGH (235 aa)). [4Fe-4S] cluster is bound by residues Cys-64, Cys-68, and Cys-71.

The protein belongs to the radical SAM superfamily. CofH family. As to quaternary structure, consists of two subunits, CofG and CofH. Requires [4Fe-4S] cluster as cofactor.

The catalysed reaction is 5-amino-6-(D-ribitylamino)uracil + L-tyrosine + S-adenosyl-L-methionine = 5-amino-5-(4-hydroxybenzyl)-6-(D-ribitylimino)-5,6-dihydrouracil + 2-iminoacetate + 5'-deoxyadenosine + L-methionine + H(+). It participates in cofactor biosynthesis; coenzyme F0 biosynthesis. Catalyzes the radical-mediated synthesis of 5-amino-5-(4-hydroxybenzyl)-6-(D-ribitylimino)-5,6-dihydrouracil from 5-amino-6-(D-ribitylamino)uracil and L-tyrosine. The sequence is that of 5-amino-6-(D-ribitylamino)uracil--L-tyrosine 4-hydroxyphenyl transferase 1 from Methanosarcina acetivorans (strain ATCC 35395 / DSM 2834 / JCM 12185 / C2A).